Here is a 952-residue protein sequence, read N- to C-terminus: Probable mixed-linked glucan synthase 6 (952 aa).

Transmembrane regions (helical) follow at residues 102-122 and 132-152; these read LLHPYRVLIFVRLIAFTLFVI and AMWLWVTSIAGEFWFGFSWLL. Aspartate 227 is a catalytic residue. The stretch at 278-308 forms a coiled coil; it reads EEFVNDRRRVRKEYDDFKARINGLEHDIKQR. Aspartate 429 and aspartate 431 together coordinate substrate. The active site involves aspartate 636. 6 helical membrane-spanning segments follow: residues 718 to 738, 744 to 764, 782 to 802, 834 to 854, 865 to 885, and 898 to 918; these read LFLIFYTTVPALSFVTGHFIV, MFYVYLAIVLGTLLILAVLEV, MTASCSAYLAAVLQVVTKVVF, WLMITPIIIILVNIIGSAVAF, WLKVAGGVFFNFWVLFHLYPF, and VVVLVWWAFTFVITAVLYINI.

Belongs to the glycosyltransferase 2 family. Plant cellulose synthase-like F subfamily.

It is found in the golgi apparatus membrane. Functionally, may catalyze both beta-1,3 and beta-1,4 glycosidic linkage on beta-D-glucan. Essential for (1,3;1,4)-beta-D-glucans synthesis in grasses and cereals (Poaceae). The mixed-linked glucans (which are not present in walls of dicotyledons or most other monocotyledonous plants) are particularly important constituents of the walls of the starchy endosperm and aleurone cells of cereal grains such as oats, wheat, rice and barley. They can account for up to 70% by weight of the wall. This is Probable mixed-linked glucan synthase 6 (CSLF6) from Oryza sativa subsp. japonica (Rice).